A 1150-amino-acid chain; its full sequence is ATP-dependent helicase/deoxyribonuclease subunit B (1150 aa).

Residue 8–15 (GRAGSGKS) coordinates ATP. The [4Fe-4S] cluster site is built by cysteine 789, cysteine 1109, cysteine 1112, and cysteine 1118.

It belongs to the helicase family. AddB/RexB type 1 subfamily. As to quaternary structure, heterodimer of AddA and AddB. It depends on Mg(2+) as a cofactor. The cofactor is [4Fe-4S] cluster.

In terms of biological role, the heterodimer acts as both an ATP-dependent DNA helicase and an ATP-dependent, dual-direction single-stranded exonuclease. Recognizes the chi site generating a DNA molecule suitable for the initiation of homologous recombination. The AddB subunit has 5' -&gt; 3' nuclease activity but not helicase activity. In Clostridium kluyveri (strain NBRC 12016), this protein is ATP-dependent helicase/deoxyribonuclease subunit B.